The primary structure comprises 527 residues: Amine oxidase [flavin-containing] A (527 aa).

Methionine 1 is modified (N-acetylmethionine). The Cytoplasmic segment spans residues methionine 1 to serine 497. At serine 383 the chain carries Phosphoserine. Cysteine 406 carries the S-8alpha-FAD cysteine modification. Residues valine 498 to valine 518 traverse the membrane as a helical; Anchor for type IV membrane protein segment. Residues tyrosine 519–serine 527 are Mitochondrial intermembrane-facing. Residues lysine 520 to lysine 522 form an interaction with membrane phospholipid headgroups region.

It belongs to the flavin monoamine oxidase family. As to quaternary structure, monomer, homo- or heterodimer (containing two subunits of similar size). Each subunit contains a covalently bound flavin. Enzymatically active as monomer. FAD is required as a cofactor.

It is found in the mitochondrion outer membrane. It catalyses the reaction a secondary aliphatic amine + O2 + H2O = a primary amine + an aldehyde + H2O2. It carries out the reaction a primary methyl amine + O2 + H2O = an aldehyde + H2O2 + NH4(+). The enzyme catalyses (R)-adrenaline + O2 + H2O = (R)-3,4-dihydroxymandelaldehyde + methylamine + H2O2. The catalysed reaction is dopamine + O2 + H2O = 3,4-dihydroxyphenylacetaldehyde + H2O2 + NH4(+). It catalyses the reaction tyramine + O2 + H2O = (4-hydroxyphenyl)acetaldehyde + H2O2 + NH4(+). It carries out the reaction (R)-noradrenaline + O2 + H2O = (R)-3,4-dihydroxymandelaldehyde + H2O2 + NH4(+). The enzyme catalyses serotonin + O2 + H2O = (5-hydroxyindol-3-yl)acetaldehyde + H2O2 + NH4(+). The catalysed reaction is kynuramine + O2 + H2O = 3-(2-aminophenyl)-3-oxopropanal + H2O2 + NH4(+). It catalyses the reaction tryptamine + O2 + H2O = indole-3-acetaldehyde + H2O2 + NH4(+). It carries out the reaction 2-phenylethylamine + O2 + H2O = 2-phenylacetaldehyde + H2O2 + NH4(+). Functionally, catalyzes the oxidative deamination of primary and some secondary amine such as neurotransmitters, with concomitant reduction of oxygen to hydrogen peroxide and has important functions in the metabolism of neuroactive and vasoactive amines in the central nervous system and peripheral tissues. Preferentially oxidizes serotonin. Also catalyzes the oxidative deamination of kynuramine to 3-(2-aminophenyl)-3-oxopropanal that can spontaneously condense to 4-hydroxyquinoline. This is Amine oxidase [flavin-containing] A from Equus caballus (Horse).